The primary structure comprises 300 residues: MTSIDWRSALTDDEQGSIRDIVAAATRHDGVAPVGDQVLRELPADRTRHLVAVDPDAGAVVGYLNLAPASDTAPPMAELVVHPDFRRRGTGAAMARAGLAEGGTHARIWAHGNLEAARATARTLGLQVVRELLQMRRPLTDLPPVTVADGVRLATYSGPGDDPELLRVNNSAFAWHPEQGGWTDADIAERRAEAWFDPAGLFMAFDDASGKLLGFHWTKVHGPDLGEVYVVGVDPAAQGRGLGATLTLTGLHHLAERLSNSPQPTVMLYVEADNGAAVKTYRRLGFDVSSVDAAYAAVAD.

N-acetyltransferase domains lie at 4-140 (IDWR…RPLT) and 151-300 (VRLA…AVAD). Residue Asp36 participates in 1D-myo-inositol 2-(L-cysteinylamino)-2-deoxy-alpha-D-glucopyranoside binding. 79 to 81 (LVV) provides a ligand contact to acetyl-CoA. Glu178, Lys219, and Glu227 together coordinate 1D-myo-inositol 2-(L-cysteinylamino)-2-deoxy-alpha-D-glucopyranoside. 231–233 (VGV) is a binding site for acetyl-CoA. Residue Tyr269 participates in 1D-myo-inositol 2-(L-cysteinylamino)-2-deoxy-alpha-D-glucopyranoside binding. An acetyl-CoA-binding site is contributed by 274–279 (NGAAVK).

Belongs to the acetyltransferase family. MshD subfamily. As to quaternary structure, monomer.

The enzyme catalyses 1D-myo-inositol 2-(L-cysteinylamino)-2-deoxy-alpha-D-glucopyranoside + acetyl-CoA = mycothiol + CoA + H(+). Catalyzes the transfer of acetyl from acetyl-CoA to desacetylmycothiol (Cys-GlcN-Ins) to form mycothiol. The protein is Mycothiol acetyltransferase of Mycobacterium sp. (strain JLS).